The following is a 118-amino-acid chain: MICOS complex subunit MIC13 (118 aa).

Residues 1–7 (MVARVWS) lie on the Mitochondrial matrix side of the membrane. The chain crosses the membrane as a helical span at residues 8 to 26 (LMRFLIKGSVAGGAVYLVY). Topologically, residues 27–118 (DQELLGPSDK…GWEYVKARTK (92 aa)) are mitochondrial intermembrane.

The protein belongs to the MICOS complex subunit Mic13 family. As to quaternary structure, component of the mitochondrial contact site and cristae organizing system (MICOS) complex, composed of at least MICOS10/MIC10, CHCHD3/MIC19, CHCHD6/MIC25, APOO/MIC26, MICOS13/MIC13, APOOL/MIC27 and IMMT/MIC60. The complex associates with mitochondrial outer membrane proteins SAMM50, MTX1 and MTX2, and with HSPA9.

The protein localises to the mitochondrion inner membrane. In terms of biological role, component of the MICOS complex, a large protein complex of the mitochondrial inner membrane that plays crucial roles in the maintenance of crista junctions, inner membrane architecture, and formation of contact sites to the outer membrane. Constituent of mature MICOS complex, it is required for the formation of cristae junction (CJ) and maintenance of cristae morphology. Required for the incorporation of MICOS10/MIC10 into the MICOS complex. The polypeptide is MICOS complex subunit MIC13 (Macaca fascicularis (Crab-eating macaque)).